Consider the following 207-residue polypeptide: Large ribosomal subunit protein uL4 (207 aa).

Residues Gln-44 to Ile-78 are disordered. Residues Gly-47–Gly-59 are compositionally biased toward basic and acidic residues. Residues Gly-60–Gly-71 show a composition bias toward basic residues.

This sequence belongs to the universal ribosomal protein uL4 family. As to quaternary structure, part of the 50S ribosomal subunit.

In terms of biological role, one of the primary rRNA binding proteins, this protein initially binds near the 5'-end of the 23S rRNA. It is important during the early stages of 50S assembly. It makes multiple contacts with different domains of the 23S rRNA in the assembled 50S subunit and ribosome. Functionally, forms part of the polypeptide exit tunnel. The sequence is that of Large ribosomal subunit protein uL4 from Brevibacillus brevis (strain 47 / JCM 6285 / NBRC 100599).